Here is a 233-residue protein sequence, read N- to C-terminus: Orotidine 5'-phosphate decarboxylase (233 aa).

Substrate-binding positions include Asp-13, Lys-35, 62–71 (DLKFHDIPNT), Thr-122, Arg-182, Gln-191, Gly-211, and Arg-212. Catalysis depends on Lys-64, which acts as the Proton donor.

The protein belongs to the OMP decarboxylase family. Type 1 subfamily. As to quaternary structure, homodimer.

It catalyses the reaction orotidine 5'-phosphate + H(+) = UMP + CO2. It functions in the pathway pyrimidine metabolism; UMP biosynthesis via de novo pathway; UMP from orotate: step 2/2. Functionally, catalyzes the decarboxylation of orotidine 5'-monophosphate (OMP) to uridine 5'-monophosphate (UMP). This Pseudomonas fluorescens (strain ATCC BAA-477 / NRRL B-23932 / Pf-5) protein is Orotidine 5'-phosphate decarboxylase.